Reading from the N-terminus, the 889-residue chain is Envelope glycoprotein gp160 (889 aa).

An N-terminal signal peptide occupies residues M1–C22. Over V23–G704 the chain is Extracellular. The N-linked (GlcNAc...) asparagine; by host glycan is linked to N37. The cysteines at positions 44 and 57 are disulfide-linked. 2 N-linked (GlcNAc...) asparagine; by host glycosylation sites follow: N70 and N114. Intrachain disulfides connect C101-C226, C108-C217, C113-C175, C239-C269, and C249-C261. The interval C113–S174 is V1. The tract at residues R120–S145 is disordered. Residues T126–S145 show a composition bias toward low complexity. N153, N163, N178, N191, N206, N218, N250, N253, N260, N284, N290, N301, N312, N322, N377, N422, N470, N486, and N489 each carry an N-linked (GlcNAc...) asparagine; by host glycan. The interval C175–C217 is V2. Residues C317 to W349 are V3. A disulfide bond links C317 and C350. 2 disulfides stabilise this stretch: C401–C469 and C408–C442. A V4 region spans residues C408–C442. The V5 stretch occupies residues G485 to M492. The fusion peptide stretch occupies residues G536–A556. Residues L599–Q615 are immunosuppression. Residues N635, N644, and N660 are each glycosylated (N-linked (GlcNAc...) asparagine; by host). Residues Q648–N675 adopt a coiled-coil conformation. Positions K681–Q702 are MPER; binding to GalCer. A helical transmembrane segment spans residues V705–A725. The Cytoplasmic segment spans residues R726 to L889. Residues Y731–V734 carry the YXXV motif; contains endocytosis signal motif. C797 is lipidated: S-palmitoyl cysteine; by host. The short motif at L888–L889 is the Di-leucine internalization motif element.

In terms of assembly, the mature envelope protein (Env) consists of a homotrimer of non-covalently associated gp120-gp41 heterodimers. The resulting complex protrudes from the virus surface as a spike. Interacts with host CD4 and CCR5. Gp120 also interacts with the C-type lectins CD209/DC-SIGN and CLEC4M/DC-SIGNR (collectively referred to as DC-SIGN(R)). The mature envelope protein (Env) consists of a homotrimer of non-covalently associated gp120-gp41 heterodimers. The resulting complex protrudes from the virus surface as a spike. Post-translationally, specific enzymatic cleavages in vivo yield mature proteins. Envelope glycoproteins are synthesized as an inactive precursor that is heavily N-glycosylated and processed likely by host cell furin in the Golgi to yield the mature SU and TM proteins. The cleavage site between SU and TM requires the minimal sequence [KR]-X-[KR]-R. In terms of processing, palmitoylation of the transmembrane protein and of Env polyprotein (prior to its proteolytic cleavage) is essential for their association with host cell membrane lipid rafts. Palmitoylation is therefore required for envelope trafficking to classical lipid rafts, but not for viral replication.

Its subcellular location is the virion membrane. The protein resides in the host cell membrane. It localises to the host endosome membrane. Functionally, the surface protein gp120 (SU) attaches the virus to the host lymphoid cell by binding to the primary receptor CD4. This interaction induces a structural rearrangement creating a high affinity binding site for a chemokine coreceptor like CCR5. This peculiar 2 stage receptor-interaction strategy allows gp120 to maintain the highly conserved coreceptor-binding site in a cryptic conformation, protected from neutralizing antibodies. These changes are transmitted to the transmembrane protein gp41 and are thought to activate its fusogenic potential by unmasking its fusion peptide. Its function is as follows. Surface protein gp120 (SU) may target the virus to gut-associated lymphoid tissue (GALT) by binding host ITGA4/ITGB7 (alpha-4/beta-7 integrins), a complex that mediates T-cell migration to the GALT. Interaction between gp120 and ITGA4/ITGB7 would allow the virus to enter GALT early in the infection, infecting and killing most of GALT's resting CD4+ T-cells. This T-cell depletion is believed to be the major insult to the host immune system leading to AIDS. The surface protein gp120 is a ligand for CD209/DC-SIGN and CLEC4M/DC-SIGNR, which are respectively found on dendritic cells (DCs), and on endothelial cells of liver sinusoids and lymph node sinuses. These interactions allow capture of viral particles at mucosal surfaces by these cells and subsequent transmission to permissive cells. DCs are professional antigen presenting cells, critical for host immunity by inducing specific immune responses against a broad variety of pathogens. They act as sentinels in various tissues where they take up antigen, process it, and present it to T-cells following migration to lymphoid organs. SIV subverts the migration properties of dendritic cells to gain access to CD4+ T-cells in lymph nodes. Virus transmission to permissive T-cells occurs either in trans (without DCs infection, through viral capture and transmission), or in cis (following DCs productive infection, through the usual CD4-gp120 interaction), thereby inducing a robust infection. In trans infection, bound virions remain infectious over days and it is proposed that they are not degraded, but protected in non-lysosomal acidic organelles within the DCs close to the cell membrane thus contributing to the viral infectious potential during DCs' migration from the periphery to the lymphoid tissues. On arrival at lymphoid tissues, intact virions recycle back to DCs' cell surface allowing virus transmission to CD4+ T-cells. Virion capture also seems to lead to MHC-II-restricted viral antigen presentation, and probably to the activation of SIV-specific CD4+ cells. In terms of biological role, the transmembrane protein gp41 (TM) acts as a class I viral fusion protein. Under the current model, the protein has at least 3 conformational states: pre-fusion native state, pre-hairpin intermediate state, and post-fusion hairpin state. During fusion of viral and target intracellular membranes, the coiled coil regions (heptad repeats) assume a trimer-of-hairpins structure, positioning the fusion peptide in close proximity to the C-terminal region of the ectodomain. The formation of this structure appears to drive apposition and subsequent fusion of viral and target cell membranes. Complete fusion occurs in host cell endosomes. The virus undergoes clathrin-dependent internalization long before endosomal fusion, thus minimizing the surface exposure of conserved viral epitopes during fusion and reducing the efficacy of inhibitors targeting these epitopes. Membranes fusion leads to delivery of the nucleocapsid into the cytoplasm. Functionally, the envelope glycoprotein gp160 precursor down-modulates cell surface CD4 antigen by interacting with it in the endoplasmic reticulum and blocking its transport to the cell surface. Its function is as follows. The gp120-gp41 heterodimer allows rapid transcytosis of the virus through CD4 negative cells such as simple epithelial monolayers of the intestinal, rectal and endocervical epithelial barriers. Both gp120 and gp41 specifically recognize glycosphingolipids galactosyl-ceramide (GalCer) or 3' sulfo-galactosyl-ceramide (GalS) present in the lipid rafts structures of epithelial cells. Binding to these alternative receptors allows the rapid transcytosis of the virus through the epithelial cells. This transcytotic vesicle-mediated transport of virions from the apical side to the basolateral side of the epithelial cells does not involve infection of the cells themselves. The protein is Envelope glycoprotein gp160 (env) of Simian immunodeficiency virus (isolate PBj14/BCL-3) (SIV-sm).